The primary structure comprises 828 residues: Periplasmic nitrate reductase (828 aa).

Positions 1-31 (MKLSRRSFMKANAVAAAAAAAGLSVPGVARA) form a signal peptide, tat-type signal. The region spanning 39 to 95 (IKWDKAPCRFCGTGCGVLVGTQQGRVVACQGDPDAPVNRGLNCIKGYFLPKIMYGKD) is the 4Fe-4S Mo/W bis-MGD-type domain. 4 residues coordinate [4Fe-4S] cluster: cysteine 46, cysteine 49, cysteine 53, and cysteine 81. Residues lysine 83, glutamine 150, asparagine 175, cysteine 179, 212-219 (WGSNMAEM), 243-247 (STFQH), 262-264 (QSD), methionine 372, glutamine 376, asparagine 482, 508-509 (SD), lysine 531, aspartate 558, and 718-727 (TGRVLEHWHT) contribute to the Mo-bis(molybdopterin guanine dinucleotide) site. Residue phenylalanine 794 participates in substrate binding. Residues asparagine 802 and lysine 819 each contribute to the Mo-bis(molybdopterin guanine dinucleotide) site.

This sequence belongs to the prokaryotic molybdopterin-containing oxidoreductase family. NasA/NapA/NarB subfamily. In terms of assembly, component of the periplasmic nitrate reductase NapAB complex composed of NapA and NapB. It depends on [4Fe-4S] cluster as a cofactor. Requires Mo-bis(molybdopterin guanine dinucleotide) as cofactor. Predicted to be exported by the Tat system. The position of the signal peptide cleavage has not been experimentally proven.

The protein localises to the periplasm. It catalyses the reaction 2 Fe(II)-[cytochrome] + nitrate + 2 H(+) = 2 Fe(III)-[cytochrome] + nitrite + H2O. Functionally, catalytic subunit of the periplasmic nitrate reductase complex NapAB. Receives electrons from NapB and catalyzes the reduction of nitrate to nitrite. This is Periplasmic nitrate reductase from Salmonella paratyphi A (strain ATCC 9150 / SARB42).